Here is a 147-residue protein sequence, read N- to C-terminus: Large ribosomal subunit protein uL11 (147 aa).

It belongs to the universal ribosomal protein uL11 family. Part of the ribosomal stalk of the 50S ribosomal subunit. Interacts with L10 and the large rRNA to form the base of the stalk. L10 forms an elongated spine to which L12 dimers bind in a sequential fashion forming a multimeric L10(L12)X complex. One or more lysine residues are methylated.

In terms of biological role, forms part of the ribosomal stalk which helps the ribosome interact with GTP-bound translation factors. This is Large ribosomal subunit protein uL11 from Metamycoplasma arthritidis (strain 158L3-1) (Mycoplasma arthritidis).